Here is a 292-residue protein sequence, read N- to C-terminus: Probable 2-(5''-triphosphoribosyl)-3'-dephosphocoenzyme-A synthase (292 aa).

This sequence belongs to the CitG/MdcB family.

It carries out the reaction 3'-dephospho-CoA + ATP = 2'-(5''-triphospho-alpha-D-ribosyl)-3'-dephospho-CoA + adenine. The sequence is that of Probable 2-(5''-triphosphoribosyl)-3'-dephosphocoenzyme-A synthase from Shigella flexneri.